The sequence spans 337 residues: Alanine racemase (337 aa).

The active-site Proton acceptor; specific for D-alanine is Lys33. The residue at position 33 (Lys33) is an N6-(pyridoxal phosphate)lysine. Arg118 is a substrate binding site. Residue Tyr246 is the Proton acceptor; specific for L-alanine of the active site. Met292 contributes to the substrate binding site.

This sequence belongs to the alanine racemase family. Requires pyridoxal 5'-phosphate as cofactor.

It catalyses the reaction L-alanine = D-alanine. Its pathway is amino-acid biosynthesis; D-alanine biosynthesis; D-alanine from L-alanine: step 1/1. Its function is as follows. Catalyzes the interconversion of L-alanine and D-alanine. May also act on other amino acids. This is Alanine racemase (alr) from Campylobacter curvus (strain 525.92).